The following is a 326-amino-acid chain: ATP synthase gamma chain (326 aa).

The protein belongs to the ATPase gamma chain family. F-type ATPases have 2 components, CF(1) - the catalytic core - and CF(0) - the membrane proton channel. CF(1) has five subunits: alpha(3), beta(3), gamma(1), delta(1), epsilon(1). CF(0) has three main subunits: a, b and c.

The protein resides in the cell membrane. Its function is as follows. Produces ATP from ADP in the presence of a proton gradient across the membrane. The gamma chain is believed to be important in regulating ATPase activity and the flow of protons through the CF(0) complex. The sequence is that of ATP synthase gamma chain from Rhodococcus jostii (strain RHA1).